The primary structure comprises 202 residues: Holliday junction branch migration complex subunit RuvA (202 aa).

The domain I stretch occupies residues 1–65 (MIGYLEGRVV…EDALELFGFA (65 aa)). Residues 66 to 144 (SLDDRETFRT…GRAPAAGLAP (79 aa)) form a domain II region. The segment at 145–155 (SVPIPGGVAGD) is flexible linker. The domain III stretch occupies residues 155 to 202 (DVVAGLTNLGYPEPEARQVAAEVLEAEPDLDVAAALRQALKRLASAKK).

This sequence belongs to the RuvA family. Homotetramer. Forms an RuvA(8)-RuvB(12)-Holliday junction (HJ) complex. HJ DNA is sandwiched between 2 RuvA tetramers; dsDNA enters through RuvA and exits via RuvB. An RuvB hexamer assembles on each DNA strand where it exits the tetramer. Each RuvB hexamer is contacted by two RuvA subunits (via domain III) on 2 adjacent RuvB subunits; this complex drives branch migration. In the full resolvosome a probable DNA-RuvA(4)-RuvB(12)-RuvC(2) complex forms which resolves the HJ.

It is found in the cytoplasm. In terms of biological role, the RuvA-RuvB-RuvC complex processes Holliday junction (HJ) DNA during genetic recombination and DNA repair, while the RuvA-RuvB complex plays an important role in the rescue of blocked DNA replication forks via replication fork reversal (RFR). RuvA specifically binds to HJ cruciform DNA, conferring on it an open structure. The RuvB hexamer acts as an ATP-dependent pump, pulling dsDNA into and through the RuvAB complex. HJ branch migration allows RuvC to scan DNA until it finds its consensus sequence, where it cleaves and resolves the cruciform DNA. The protein is Holliday junction branch migration complex subunit RuvA of Solidesulfovibrio magneticus (strain ATCC 700980 / DSM 13731 / RS-1) (Desulfovibrio magneticus).